Here is a 344-residue protein sequence, read N- to C-terminus: N-acetyl-gamma-glutamyl-phosphate reductase (344 aa).

Cysteine 149 is a catalytic residue.

Belongs to the NAGSA dehydrogenase family. Type 1 subfamily.

The protein localises to the cytoplasm. The catalysed reaction is N-acetyl-L-glutamate 5-semialdehyde + phosphate + NADP(+) = N-acetyl-L-glutamyl 5-phosphate + NADPH + H(+). It functions in the pathway amino-acid biosynthesis; L-arginine biosynthesis; N(2)-acetyl-L-ornithine from L-glutamate: step 3/4. In terms of biological role, catalyzes the NADPH-dependent reduction of N-acetyl-5-glutamyl phosphate to yield N-acetyl-L-glutamate 5-semialdehyde. The polypeptide is N-acetyl-gamma-glutamyl-phosphate reductase (Thermoanaerobacter pseudethanolicus (strain ATCC 33223 / 39E) (Clostridium thermohydrosulfuricum)).